The primary structure comprises 381 residues: Subtilisin NAT (381 aa).

The N-terminal stretch at 1–29 (MRSKKLWISLLFALTLIFTMAFSNMSAQA) is a signal peptide. A propeptide spanning residues 30–106 (AGKSSTEKKY…VEEDHIAHEY (77 aa)) is cleaved from the precursor. In terms of domain architecture, Inhibitor I9 spans 38 to 103 (KYIVGFKQTM…VAYVEEDHIA (66 aa)). In terms of domain architecture, Peptidase S8 spans 111-380 (PYGISQIKAP…KGLINVQAAA (270 aa)). Asp138 (charge relay system) is an active-site residue. Asp147 lines the Ca(2+) pocket. Catalysis depends on His170, which acts as the Charge relay system. Residues Leu181, Asn183, Ile185, Val187, Ala275, Tyr277, Thr280, and Asp303 each contribute to the Ca(2+) site. The active-site Charge relay system is Ser327.

This sequence belongs to the peptidase S8 family. Monomer. Ca(2+) is required as a cofactor.

It is found in the secreted. The catalysed reaction is Hydrolysis of proteins with broad specificity for peptide bonds, and a preference for a large uncharged residue in P1. Hydrolyzes peptide amides.. With respect to regulation, inhibited by PMSF (phenylmethylsulfonyl fluoride). Its function is as follows. Subtilisin is an extracellular alkaline serine protease, it catalyzes the hydrolysis of proteins and peptide amides. Subtilisin NAT also has fibrinolytic activity. The protein is Subtilisin NAT of Bacillus subtilis subsp. natto.